An 84-amino-acid polypeptide reads, in one-letter code: Putative membrane protein insertion efficiency factor (84 aa).

This sequence belongs to the UPF0161 family.

The protein resides in the cell inner membrane. In terms of biological role, could be involved in insertion of integral membrane proteins into the membrane. This chain is Putative membrane protein insertion efficiency factor, found in Shewanella pealeana (strain ATCC 700345 / ANG-SQ1).